The sequence spans 166 residues: Cyanate hydratase (166 aa).

Residues R106, E109, and S132 contribute to the active site.

Belongs to the cyanase family.

The enzyme catalyses cyanate + hydrogencarbonate + 3 H(+) = NH4(+) + 2 CO2. Catalyzes the reaction of cyanate with bicarbonate to produce ammonia and carbon dioxide. In Verticillium alfalfae (strain VaMs.102 / ATCC MYA-4576 / FGSC 10136) (Verticillium wilt of alfalfa), this protein is Cyanate hydratase.